A 99-amino-acid chain; its full sequence is U8-agatoxin-Ao1a (99 aa).

The signal sequence occupies residues 1–19 (MKSLLFVTIAVYFVAQAVT). Residues 20–45 (ANLLSNFLGSSLIDDDKGNMHKLYKR) constitute a propeptide that is removed on maturation.

It belongs to the neurotoxin 02 (plectoxin) family. Contains 5 disulfide bonds. Expressed by the venom gland.

Its subcellular location is the secreted. This chain is U8-agatoxin-Ao1a, found in Agelena orientalis (Funnel-web spider).